A 511-amino-acid chain; its full sequence is MTSLPNLLSRSDYLLALPMLVLSGFAVAILLLDLVLPKGWKRWNAALALAGLAAATMSLAKVWQAVYYIETPESKRFSGFLGSLVMDRFAIYFYLLFIVGAAVAILMSIRYMEIEHEDHGEYHALILFATIGMMCMASGMDLILLFVGLELMALSTYVLVGFLKRDKRSNEAALKYLLLGAFSSGIFAYGLSLFYGLTGSTNLTEIANKLAQRMADNPRDPIALLALITTATGLLFKIAAVPFHQWAPDAYEGAPTAVTGFMSVAVKAAGWAMLLRIFLFMLWPMREQYTPILIFVAVATMIGGNFAALTQTNVKRLLAYSSISHVGYMLLGLVASDGKNSSTGIKGILVYLAVYTFMNLGAFAVITSLRRRDIIGDELDDLAGLFFKAPSEAVLLLVFLLSLAGIPPLAGFWGKYYIFLSLMETGHYTLAVVAVLFAVLGMYYYLRIANAAFMREAVDAEPVKISPSLGAALWISALGTLGIGLFPEVFLRIVNWSLALSGDARVIGLLR.

14 consecutive transmembrane segments (helical) span residues 15 to 35 (LALPMLVLSGFAVAILLLDLV), 46 to 66 (ALALAGLAAATMSLAKVWQAV), 89 to 109 (FAIYFYLLFIVGAAVAILMSI), 120 to 140 (GEYHALILFATIGMMCMASGM), 142 to 162 (LILLFVGLELMALSTYVLVGF), 177 to 197 (LLLGAFSSGIFAYGLSLFYGL), 221 to 241 (PIALLALITTATGLLFKIAAV), 264 to 284 (VAVKAAGWAMLLRIFLFMLWP), 289 to 309 (YTPILIFVAVATMIGGNFAAL), 317 to 337 (LLAYSSISHVGYMLLGLVASD), 347 to 367 (GILVYLAVYTFMNLGAFAVIT), 393 to 413 (AVLLLVFLLSLAGIPPLAGFW), 426 to 446 (GHYTLAVVAVLFAVLGMYYYL), and 471 to 491 (AALWISALGTLGIGLFPEVFL).

Belongs to the complex I subunit 2 family. NDH-1 is composed of 14 different subunits. Subunits NuoA, H, J, K, L, M, N constitute the membrane sector of the complex.

It is found in the cell inner membrane. The enzyme catalyses a quinone + NADH + 5 H(+)(in) = a quinol + NAD(+) + 4 H(+)(out). Functionally, NDH-1 shuttles electrons from NADH, via FMN and iron-sulfur (Fe-S) centers, to quinones in the respiratory chain. The immediate electron acceptor for the enzyme in this species is believed to be ubiquinone. Couples the redox reaction to proton translocation (for every two electrons transferred, four hydrogen ions are translocated across the cytoplasmic membrane), and thus conserves the redox energy in a proton gradient. This chain is NADH-quinone oxidoreductase subunit N 1, found in Koribacter versatilis (strain Ellin345).